The sequence spans 218 residues: Ribonuclease HII (218 aa).

Residues 24–218 (ESIAGVDEVG…KLFAVNGSLT (195 aa)) enclose the RNase H type-2 domain. The a divalent metal cation site is built by aspartate 30, glutamate 31, and aspartate 126.

Belongs to the RNase HII family. Requires Mn(2+) as cofactor. It depends on Mg(2+) as a cofactor.

Its subcellular location is the cytoplasm. The enzyme catalyses Endonucleolytic cleavage to 5'-phosphomonoester.. Functionally, endonuclease that specifically degrades the RNA of RNA-DNA hybrids. This chain is Ribonuclease HII, found in Prochlorococcus marinus (strain MIT 9313).